The primary structure comprises 180 residues: Segregation and condensation protein B (180 aa).

Belongs to the ScpB family. Homodimer. Homodimerization may be required to stabilize the binding of ScpA to the Smc head domains. Component of a cohesin-like complex composed of ScpA, ScpB and the Smc homodimer, in which ScpA and ScpB bind to the head domain of Smc. The presence of the three proteins is required for the association of the complex with DNA.

The protein localises to the cytoplasm. Its function is as follows. Participates in chromosomal partition during cell division. May act via the formation of a condensin-like complex containing Smc and ScpA that pull DNA away from mid-cell into both cell halves. This is Segregation and condensation protein B from Staphylococcus aureus (strain Mu3 / ATCC 700698).